Here is a 610-residue protein sequence, read N- to C-terminus: Zinc metalloproteinase-disintegrin-like acurhagin (610 aa).

A signal peptide spans 1-20 (MIQVLLVTICLAAFPYQGSS). The propeptide occupies 21-191 (IILESGDVND…ISQLNLIPEQ (171 aa)). Q192 is subject to Pyrrolidone carboxylic acid. A Peptidase M12B domain is found at 198-394 (KYVETVVVVD…HNPECIDNEP (197 aa)). E201 and D285 together coordinate Ca(2+). 3 disulfides stabilise this stretch: C309–C389, C349–C373, and C351–C356. H334 is a Zn(2+) binding site. E335 is an active-site residue. 2 residues coordinate Zn(2+): H338 and H344. N372 is a glycosylation site (N-linked (GlcNAc...) asparagine). Residues C389, N392, N407, L409, E411, E414, and D417 each coordinate Ca(2+). The Disintegrin domain maps to 402–488 (PPLCGNELLE…ECPADVFHKN (87 aa)). Disulfide bonds link C405–C434, C416–C429, C418–C424, C428–C451, C442–C448, C447–C473, C460–C480, C467–C499, C492–C504, C511–C561, C526–C572, C539–C549, C556–C598, and C592–C603. Residues 466–468 (ECD) carry the D/ECD-tripeptide motif. The Ca(2+) site is built by D468, P469, E471, D483, and V484.

It belongs to the venom metalloproteinase (M12B) family. P-III subfamily. P-IIIa sub-subfamily. As to quaternary structure, monomer. Requires Zn(2+) as cofactor. N-glycosylated. In terms of tissue distribution, expressed by the venom gland.

Its subcellular location is the secreted. The proteinase activity is slightly enhanced by Ca(2+) and Mg(2+), but is completely inhibited by Zn(2+). Is completely inhibited by phenanthroline and EDTA. Not inhibited by PMSF. In terms of biological role, snake venom zinc metalloprotease that causes hemorrhage and dose-dependently inhibits platelet aggregation triggered by collagen. This inhibition is due to its binding to glycoprotein VI (GP6) and collagen. The binding to GP6 results in inhibition of the signaling pathway (decrease of tyrosine phosphorylation of signaling proteins such as Syk, LAT, PI3-K and PLCgamma2). Preferentially cleaves alpha chain (FGA) of fibrinogen, followed by beta chain (FGB). Also degrades the extracellular matrix protein fibronectin (FN1), and cleaves collagen and von Willebrand factor (VWF). In Deinagkistrodon acutus (Hundred-pace snake), this protein is Zinc metalloproteinase-disintegrin-like acurhagin.